A 766-amino-acid chain; its full sequence is Hypoxia-inducible factor 1-alpha (766 aa).

Residues 1–26 (MDTGVVPEKKSRVSSDRRKEKSRDAA) are disordered. Residues 7-26 (PEKKSRVSSDRRKEKSRDAA) show a composition bias toward basic and acidic residues. The region spanning 17 to 70 (RRKEKSRDAARCRRGKESEVFYELAQELPLPHSVTSNLDKASIMRLAISYLHMR) is the bHLH domain. PAS domains follow at residues 82–159 (EERE…TSKK) and 230–300 (PHPS…FAKG). The PAC domain maps to 304 to 347 (TGQYRMLAKRGGFVWVETQATVIYNNKNSQPQCVVCVNYVLSGI). The interval 361–383 (DMRPVKKELEEEESSEPEVSPVL) is disordered. 4-hydroxyproline is present on P426. Residues 475–509 (DQHLVPNTSVDTTEVSTGPDSSSTPGSHSFTEPDS) are disordered. Residues 479–489 (VPNTSVDTTEV) show a composition bias toward polar residues. Residues 490-503 (STGPDSSSTPGSHS) are compositionally biased toward low complexity. P559 bears the 4-hydroxyproline mark. The Nuclear localization signal motif lies at 718-721 (LLGI). Residue N743 is modified to (3S)-3-hydroxyasparagine.

Efficient DNA binding requires heterodimerization of an alpha and a beta/ARNT subunit. Post-translationally, in normoxia, is hydroxylated on Pro-426 and Pro-559. The hydroxylated prolines promote interaction with VHL, initiating rapid ubiquitination and subsequent proteasomal degradation. Under hypoxia, proline hydroxylation is impaired and ubiquitination is attenuated, resulting in stabilization. In normoxia, is hydroxylated on Asn-743, thus abrogating interaction with CREBBP and EP300 and preventing transcriptional activation. In terms of processing, the iron and 2-oxoglutarate dependent 3-hydroxylation of asparagine is (S) stereospecific within HIF CTAD domains.

It is found in the cytoplasm. It localises to the nucleus. The protein localises to the nucleus speckle. Its activity is regulated as follows. Induced by reactive oxygen species (ROS). Its function is as follows. Functions as a master transcriptional regulator of the adaptive response to hypoxia. Under hypoxic conditions, activates the transcription of over 40 genes, including erythropoietin, glucose transporters, glycolytic enzymes, vascular endothelial growth factor, HILPDA, and other genes whose protein products increase oxygen delivery or facilitate metabolic adaptation to hypoxia. Plays an essential role in embryonic vascularization, tumor angiogenesis and pathophysiology of ischemic disease. The sequence is that of Hypoxia-inducible factor 1-alpha (hif1a) from Oncorhynchus mykiss (Rainbow trout).